A 308-amino-acid polypeptide reads, in one-letter code: Cytochrome c biogenesis protein CcsA (308 aa).

Transmembrane regions (helical) follow at residues 2-22 (IVST…SILI), 44-64 (GMLV…IYLG), 71-91 (LSES…IAYF), 143-163 (MILG…LMVI), 212-232 (VIGL…VWAN), 239-259 (WSWD…AIYL), and 273-293 (AIVA…VNLV).

It belongs to the CcmF/CycK/Ccl1/NrfE/CcsA family. As to quaternary structure, may interact with Ccs1.

The protein localises to the plastid membrane. In terms of biological role, required during biogenesis of c-type cytochromes (cytochrome c6 and cytochrome f) at the step of heme attachment. This is Cytochrome c biogenesis protein CcsA from Cuscuta exaltata (Tall dodder).